A 147-amino-acid polypeptide reads, in one-letter code: Basic phospholipase A2 beta-bungarotoxin A1 chain (147 aa).

A signal peptide spans 1-19; that stretch reads MYPAHLLILSAVCVSLLGA. Residues 20–27 constitute a propeptide that is removed on maturation; sequence ANIPPHPL. 6 disulfides stabilise this stretch: cysteine 54–cysteine 146, cysteine 56–cysteine 72, cysteine 71–cysteine 127, cysteine 78–cysteine 120, cysteine 88–cysteine 113, and cysteine 106–cysteine 118. The Ca(2+) site is built by tyrosine 55, glycine 57, and glycine 59. The active site involves histidine 75. Aspartate 76 contributes to the Ca(2+) binding site. Aspartate 121 is a catalytic residue.

The protein belongs to the phospholipase A2 family. Group I subfamily. D49 sub-subfamily. In terms of assembly, heterodimer; disulfide-linked. The A chains have phospholipase A2 activity and the B chains show homology with the basic protease inhibitors. The cofactor is Ca(2+). Expressed by the venom gland.

The protein localises to the secreted. It carries out the reaction a 1,2-diacyl-sn-glycero-3-phosphocholine + H2O = a 1-acyl-sn-glycero-3-phosphocholine + a fatty acid + H(+). Its function is as follows. Snake venom phospholipase A2 (PLA2) that inhibits neuromuscular transmission by blocking acetylcholine release from the nerve termini. PLA2 catalyzes the calcium-dependent hydrolysis of the 2-acyl groups in 3-sn-phosphoglycerides. In Bungarus caeruleus (Indian krait), this protein is Basic phospholipase A2 beta-bungarotoxin A1 chain.